A 66-amino-acid chain; its full sequence is Putative inactive (E)-beta-ocimene synthase, chloroplastic (66 aa).

The transit peptide at 1 to 25 (MAAHNLCFNSAFVCNVHHQKTQHFP) directs the protein to the chloroplast.

This sequence belongs to the terpene synthase family. Tpsb subfamily. In terms of tissue distribution, expressed exclusively in flowers.

The protein localises to the plastid. It localises to the chloroplast. The protein is Putative inactive (E)-beta-ocimene synthase, chloroplastic (TPS02) of Arabidopsis thaliana (Mouse-ear cress).